A 755-amino-acid chain; its full sequence is Kelch-like protein 5 (755 aa).

The interval 152 to 184 (LDRPEVDDGTSEEENESDSSSCRTSNSSQTLSS) is disordered. Positions 158 to 168 (DDGTSEEENES) are enriched in acidic residues. Residues 169 to 184 (DSSSCRTSNSSQTLSS) are compositionally biased toward low complexity. Positions 220-287 (CDVILVAGDR…AYTGRLELKE (68 aa)) constitute a BTB domain. 6 Kelch repeats span residues 468 to 514 (TLFA…VLDD), 515 to 561 (KLYV…VLEG), 563 to 608 (MYAV…VLSG), 609 to 655 (KLYA…TWNG), 657 to 708 (LYAI…LLGD), and 709 to 754 (KLYA…VTVK).

In terms of tissue distribution, expressed in adrenal gland, ovary and thyroid gland and less abundantly in lymph node, prostate, spinal cord, testis and trachea.

The protein resides in the cytoplasm. The protein localises to the cytoskeleton. This chain is Kelch-like protein 5 (KLHL5), found in Homo sapiens (Human).